A 318-amino-acid chain; its full sequence is CRISPR-associated endonuclease Cas1 1 (318 aa).

Positions 160, 225, and 240 each coordinate Mn(2+).

Belongs to the CRISPR-associated endonuclease Cas1 family. Homodimer, forms a heterotetramer with a Cas2 homodimer. It depends on Mg(2+) as a cofactor. The cofactor is Mn(2+).

Functionally, CRISPR (clustered regularly interspaced short palindromic repeat), is an adaptive immune system that provides protection against mobile genetic elements (viruses, transposable elements and conjugative plasmids). CRISPR clusters contain spacers, sequences complementary to antecedent mobile elements, and target invading nucleic acids. CRISPR clusters are transcribed and processed into CRISPR RNA (crRNA). Acts as a dsDNA endonuclease. Involved in the integration of spacer DNA into the CRISPR cassette. In Thermodesulfovibrio yellowstonii (strain ATCC 51303 / DSM 11347 / YP87), this protein is CRISPR-associated endonuclease Cas1 1.